The primary structure comprises 548 residues: Flagellin (548 aa).

The protein belongs to the bacterial flagellin family.

Its subcellular location is the secreted. The protein localises to the bacterial flagellum. Its function is as follows. Flagellin is the subunit protein which polymerizes to form the filaments of bacterial flagella. The polypeptide is Flagellin (fliC) (Escherichia coli O127:H6 (strain E2348/69 / EPEC)).